The following is a 529-amino-acid chain: Bifunctional purine biosynthesis protein PurH (529 aa).

Positions 2-149 (TNLVPVGRAL…KNHRFVNVVT (148 aa)) constitute an MGS-like domain.

Belongs to the PurH family.

It carries out the reaction (6R)-10-formyltetrahydrofolate + 5-amino-1-(5-phospho-beta-D-ribosyl)imidazole-4-carboxamide = 5-formamido-1-(5-phospho-D-ribosyl)imidazole-4-carboxamide + (6S)-5,6,7,8-tetrahydrofolate. The enzyme catalyses IMP + H2O = 5-formamido-1-(5-phospho-D-ribosyl)imidazole-4-carboxamide. It participates in purine metabolism; IMP biosynthesis via de novo pathway; 5-formamido-1-(5-phospho-D-ribosyl)imidazole-4-carboxamide from 5-amino-1-(5-phospho-D-ribosyl)imidazole-4-carboxamide (10-formyl THF route): step 1/1. Its pathway is purine metabolism; IMP biosynthesis via de novo pathway; IMP from 5-formamido-1-(5-phospho-D-ribosyl)imidazole-4-carboxamide: step 1/1. This chain is Bifunctional purine biosynthesis protein PurH, found in Cereibacter sphaeroides (strain ATCC 17029 / ATH 2.4.9) (Rhodobacter sphaeroides).